The primary structure comprises 373 residues: UDP-N-acetylglucosamine--N-acetylmuramyl-(pentapeptide) pyrophosphoryl-undecaprenol N-acetylglucosamine transferase (373 aa).

UDP-N-acetyl-alpha-D-glucosamine is bound by residues 14–16, Asn128, Arg165, Ser199, and Gln295; that span reads TAG.

This sequence belongs to the glycosyltransferase 28 family. MurG subfamily.

The protein localises to the cell membrane. It catalyses the reaction di-trans,octa-cis-undecaprenyl diphospho-N-acetyl-alpha-D-muramoyl-L-alanyl-D-glutamyl-meso-2,6-diaminopimeloyl-D-alanyl-D-alanine + UDP-N-acetyl-alpha-D-glucosamine = di-trans,octa-cis-undecaprenyl diphospho-[N-acetyl-alpha-D-glucosaminyl-(1-&gt;4)]-N-acetyl-alpha-D-muramoyl-L-alanyl-D-glutamyl-meso-2,6-diaminopimeloyl-D-alanyl-D-alanine + UDP + H(+). Its pathway is cell wall biogenesis; peptidoglycan biosynthesis. Cell wall formation. Catalyzes the transfer of a GlcNAc subunit on undecaprenyl-pyrophosphoryl-MurNAc-pentapeptide (lipid intermediate I) to form undecaprenyl-pyrophosphoryl-MurNAc-(pentapeptide)GlcNAc (lipid intermediate II). The chain is UDP-N-acetylglucosamine--N-acetylmuramyl-(pentapeptide) pyrophosphoryl-undecaprenol N-acetylglucosamine transferase from Mycobacterium sp. (strain JLS).